Consider the following 488-residue polypeptide: Kelch-like protein 15 (488 aa).

The region spanning 31–98 is the BTB domain; it reads LDVTLVIEDH…MYYGTIELSM (68 aa). Positions 133–237 constitute a BACK domain; sequence CAEIMRLLDD…TPSSVFEKVK (105 aa). Kelch repeat units lie at residues 328–379, 381–426, and 428–473; these read FVFL…VIGR, VYAV…VLGN, and LYIT…NKCK.

Homodimer. Interacts with CUL3.

It localises to the nucleus. Its pathway is protein modification; protein ubiquitination. In terms of biological role, substrate-specific adapter for CUL3 E3 ubiquitin-protein ligase complex. This Gallus gallus (Chicken) protein is Kelch-like protein 15 (KLHL15).